A 634-amino-acid polypeptide reads, in one-letter code: Sodium-dependent neutral amino acid transporter B(0)AT1 (634 aa).

Residues 1-41 (MVRLVLPNPGLEDRIPSLDELEVIEKEEASSRPKWDNKAQY) lie on the Cytoplasmic side of the membrane. Residue S17 is modified to Phosphoserine. A helical transmembrane segment spans residues 42 to 62 (MLTCVGFCVGLGNVWRFPYLC). The Extracellular portion of the chain corresponds to 63–65 (QSH). The chain crosses the membrane as a helical span at residues 66–86 (GGGAFMIPFLILLVLEGIPLL). Residues 87–119 (HLEFAIGQRLRKGSVGVWSSIHPALKGVGIASM) lie on the Cytoplasmic side of the membrane. Residues 120–140 (FVSFMVGLYYNTIIAWVMWYF) traverse the membrane as a helical segment. Topologically, residues 141–192 (FNSFQEPLPWSECPLNQNQTGYVEECAKSSSVDYFWYRETLNISTSISDSGS) are extracellular. N-linked (GlcNAc...) asparagine glycosylation is found at N158 and N182. The helical transmembrane segment at 193 to 213 (IQWWILLCLTCAWSVLYVCTI) threads the bilayer. The Cytoplasmic portion of the chain corresponds to 214 to 221 (RGIETTGK). Residues 222 to 242 (AVYITSTLPYVVLTIFLIRGL) traverse the membrane as a helical segment. Residues 243–268 (TLKGATNGIVFLFTPNITELSNPNTW) lie on the Extracellular side of the membrane. N258 carries N-linked (GlcNAc...) asparagine glycosylation. Residues 269 to 289 (LDAGAQVFYSFSLAFGGLISF) form a helical membrane-spanning segment. Residues 290-304 (SSYNSVHNNCEMDSV) lie on the Cytoplasmic side of the membrane. A helical transmembrane segment spans residues 305 to 325 (IVSIINGFTSVYAATVVYSII). Topologically, residues 326–413 (GFRATERFDD…TEAITKMPVS (88 aa)) are extracellular. N-linked (GlcNAc...) asparagine glycans are attached at residues N354 and N368. A helical membrane pass occupies residues 414–434 (PLWSVLFFIMLFCLGLSSMFG). The Cytoplasmic portion of the chain corresponds to 435–456 (NMEGVVVPLQDLNITPKKWPKE). Residues 457-477 (LLTGLICLGTYLIAFIFTLNS) traverse the membrane as a helical segment. Over 478-490 (GQYWLSLLDSYAG) the chain is Extracellular. The helical transmembrane segment at 491–511 (SIPLLIIAFCEMFAVVYVYGV) threads the bilayer. The Cytoplasmic segment spans residues 512 to 531 (DRFNKDIEFMIGHKPNIFWQ). The chain crosses the membrane as a helical span at residues 532–552 (VTWRVVSPLIMLVIFLFFFVI). Topologically, residues 553-581 (EVNKQLMYSVWDPDYEEFPKSQKVPYPDW) are extracellular. A helical transmembrane segment spans residues 582 to 602 (VYAVVVIVAGVPCLTIPCFAI). Over 603–634 (YKLIRNYCQKSGDQHGLVNALSTASVNGDLKN) the chain is Cytoplasmic. S627 carries the phosphoserine modification.

It belongs to the sodium:neurotransmitter symporter (SNF) (TC 2.A.22) family. SLC6A19 subfamily. Interacts in a tissue-specific manner with ACE2 in small intestine and with CLTRN in the kidney. Interacts with CLTRN; this interaction is required for trafficking of SLC6A19 to the plasma membrane and for its catalytic activation in kidneys. Interacts with ACE2; this interaction is required for trafficking of SLC6A19 to the plasma membrane and for its catalytic activation in intestine. Interacts with ANPEP; the interaction positively regulates its amino acid transporter activity.

The protein resides in the membrane. It carries out the reaction L-alanine(in) + Na(+)(in) = L-alanine(out) + Na(+)(out). It catalyses the reaction L-cysteine(in) + Na(+)(in) = L-cysteine(out) + Na(+)(out). The catalysed reaction is L-glutamine(in) + Na(+)(in) = L-glutamine(out) + Na(+)(out). The enzyme catalyses glycine(in) + Na(+)(in) = glycine(out) + Na(+)(out). It carries out the reaction L-isoleucine(in) + Na(+)(in) = L-isoleucine(out) + Na(+)(out). It catalyses the reaction L-leucine(in) + Na(+)(in) = L-leucine(out) + Na(+)(out). The catalysed reaction is L-methionine(in) + Na(+)(in) = L-methionine(out) + Na(+)(out). The enzyme catalyses L-phenylalanine(in) + Na(+)(in) = L-phenylalanine(out) + Na(+)(out). It carries out the reaction L-serine(in) + Na(+)(in) = L-serine(out) + Na(+)(out). It catalyses the reaction L-tryptophan(in) + Na(+)(in) = L-tryptophan(out) + Na(+)(out). The catalysed reaction is L-tyrosine(in) + Na(+)(in) = L-tyrosine(out) + Na(+)(out). The enzyme catalyses L-valine(in) + Na(+)(in) = L-valine(out) + Na(+)(out). In terms of biological role, transporter that mediates resorption of neutral amino acids across the apical membrane of renal and intestinal epithelial cells. This uptake is sodium-dependent and chloride-independent. Requires CLTRN in kidney or ACE2 in intestine for cell surface expression and amino acid transporter activity. This Rattus norvegicus (Rat) protein is Sodium-dependent neutral amino acid transporter B(0)AT1.